Consider the following 364-residue polypeptide: Developmentally-regulated GTP-binding protein 2 (364 aa).

At Lys-21 the chain carries (3S)-3-hydroxylysine. The 226-residue stretch at 63–288 (ARVALIGFPS…LLEMLWEYLA (226 aa)) folds into the OBG-type G domain. GTP contacts are provided by residues 69 to 76 (GFPSVGKS), 94 to 98 (FTTLT), 115 to 118 (DLPG), 246 to 249 (NKID), and 269 to 271 (SCG). Mg(2+)-binding residues include Ser-76 and Thr-96. One can recognise a TGS domain in the interval 288–363 (ALTCIYTKKR…EHEDVIQIVK (76 aa)).

Belongs to the TRAFAC class OBG-HflX-like GTPase superfamily. OBG GTPase family. Interacts with RWDD1; this interaction confers protection to polyubiquitination and proteolytic degradation. Interacts with JMJD7; this interaction is direct. Mg(2+) serves as cofactor. In terms of processing, hydroxylated (with S stereochemistry) at C-3 of Lys-21 by JMJD7; this modification hinders trypsin-catalyzed proteolysis in vitro. Polyubiquitinated. In terms of tissue distribution, highest levels in skeletal muscle, heart and kidney. Low levels in colon, thymus, spleen, small intestine, lung and Leukocytes.

The protein localises to the nucleus. It is found in the cytoplasm. It carries out the reaction GTP + H2O = GDP + phosphate + H(+). Its function is as follows. Catalyzes the conversion of GTP to GDP through hydrolysis of the gamma-phosphate bond in GTP. When hydroxylated at C-3 of 'Lys-21' by JMJD7, may bind to RNA and play a role in translation. In Homo sapiens (Human), this protein is Developmentally-regulated GTP-binding protein 2.